The following is a 729-amino-acid chain: Fatty acid oxidation complex subunit alpha (729 aa).

The segment at 1-189 (MLYKGDTLYL…KIGLVDGVVK (189 aa)) is enoyl-CoA hydratase/isomerase. Asp-296 serves as a coordination point for substrate. Positions 311–729 (ETPKQAAVLG…ARPVGDLKTA (419 aa)) are 3-hydroxyacyl-CoA dehydrogenase. Residues Met-324, Asp-343, 400–402 (VVE), Lys-407, and Ser-429 each bind NAD(+). His-450 functions as the For 3-hydroxyacyl-CoA dehydrogenase activity in the catalytic mechanism. Asn-453 lines the NAD(+) pocket. Substrate contacts are provided by Asn-500 and Tyr-660. A disordered region spans residues 708-729 (RHNEPYYPPVEPARPVGDLKTA).

The protein in the N-terminal section; belongs to the enoyl-CoA hydratase/isomerase family. In the C-terminal section; belongs to the 3-hydroxyacyl-CoA dehydrogenase family. Heterotetramer of two alpha chains (FadB) and two beta chains (FadA).

It catalyses the reaction a (3S)-3-hydroxyacyl-CoA + NAD(+) = a 3-oxoacyl-CoA + NADH + H(+). It carries out the reaction a (3S)-3-hydroxyacyl-CoA = a (2E)-enoyl-CoA + H2O. The catalysed reaction is a 4-saturated-(3S)-3-hydroxyacyl-CoA = a (3E)-enoyl-CoA + H2O. The enzyme catalyses (3S)-3-hydroxybutanoyl-CoA = (3R)-3-hydroxybutanoyl-CoA. It catalyses the reaction a (3Z)-enoyl-CoA = a 4-saturated (2E)-enoyl-CoA. It carries out the reaction a (3E)-enoyl-CoA = a 4-saturated (2E)-enoyl-CoA. The protein operates within lipid metabolism; fatty acid beta-oxidation. Functionally, involved in the aerobic and anaerobic degradation of long-chain fatty acids via beta-oxidation cycle. Catalyzes the formation of 3-oxoacyl-CoA from enoyl-CoA via L-3-hydroxyacyl-CoA. It can also use D-3-hydroxyacyl-CoA and cis-3-enoyl-CoA as substrate. In Escherichia coli (strain K12 / MC4100 / BW2952), this protein is Fatty acid oxidation complex subunit alpha.